Consider the following 177-residue polypeptide: ATP-dependent protease subunit HslV (177 aa).

The active site involves T7. Positions 162, 165, and 168 each coordinate Na(+).

The protein belongs to the peptidase T1B family. HslV subfamily. A double ring-shaped homohexamer of HslV is capped on each side by a ring-shaped HslU homohexamer. The assembly of the HslU/HslV complex is dependent on binding of ATP.

The protein localises to the cytoplasm. The catalysed reaction is ATP-dependent cleavage of peptide bonds with broad specificity.. Its activity is regulated as follows. Allosterically activated by HslU binding. Its function is as follows. Protease subunit of a proteasome-like degradation complex believed to be a general protein degrading machinery. In Thioalkalivibrio sulfidiphilus (strain HL-EbGR7), this protein is ATP-dependent protease subunit HslV.